The chain runs to 461 residues: Bacterial E1-like protein BilD (461 aa).

The active-site Glycyl thioester intermediate is the C385.

In terms of biological role, component of the Bil (bacterial ISG15-like) antiviral defense system, composed of BilA, BilB, BilC and BilD. The Bil system specifically conjugates a ubiquitin-like moiety (bilA) to the bacteriophage central tail fiber (CTF, or tip attachment protein J) via reactions involving E1 (bilD) and E2 (bilB). Modifies CTF of phage SECphi27 and SECphi4, which probably interferes with assembly of the phage tail. Also modifies T5 baseplate hub protein pb3 (gene D16), but not gp27 of phage T6 (Bil defends against T6). BilD (E1) catalyzes the first step in conjugation. Activates ubiquitin-like BilA by first adenylating its C-terminal glycine residue with ATP, and then conjugates it to the side chain of a cysteine residue in E1 (this protein), yielding a ubiquitin-E1 thioester and free AMP. Bil-encoding bacteria produce mostly defective phage SECphi27, many of which have phage assembly defects, including no tails. SECphi27 phage progeny produced in E.coli with the Bil system inject less DNA into naive host cells, maybe because the phage are less able to adsorb and inject their DNA into host cells. Expression of the Bil system in E.coli (strain MG1655) confers about 100-fold resistance to phage SECphi27, SECphi18, SECphi6, SECphi4 and T5, but not to SECphi17. When cells expressing the Bil system are infected by phage SECphi27 at low multiplicity of infection (0.03 MOI) the culture survives, at 3.0 MOI the culture collapses at the same time as cells without the Bil system. The sequence is that of Bacterial E1-like protein BilD from Collimonas sp. (strain OK412).